A 299-amino-acid chain; its full sequence is Secreted LysM effector ldpB (299 aa).

The first 19 residues, 1–19 (MGLTSILIAQVLFLGAANS), serve as a signal peptide directing secretion. LysM domains follow at residues 46 to 91 (WVND…SYCV), 135 to 182 (AFYK…YVCI), and 211 to 258 (KYHK…YVCV). Asparagine 154 is a glycosylation site (N-linked (GlcNAc...) asparagine). Positions 266-283 (ATATPQPTPQPQQSSSPD) are enriched in low complexity. Positions 266–288 (ATATPQPTPQPQQSSSPDQPMPQ) are disordered.

It belongs to the secreted LysM effector family.

It localises to the secreted. The protein localises to the cell wall. Its subcellular location is the extracellular space. It is found in the extracellular matrix. Its function is as follows. Cell wall chitin of A.fumigatus recruits lung eosinophils during infection and ldpB might have a role in sequestration of chitin and act as triggers of host immunity to dampen host defense. In Aspergillus fumigatus (strain ATCC MYA-4609 / CBS 101355 / FGSC A1100 / Af293) (Neosartorya fumigata), this protein is Secreted LysM effector ldpB.